The primary structure comprises 468 residues: 6-phospho-beta-galactosidase (468 aa).

D-galactose 6-phosphate is bound by residues Q19, H116, N159, E160, and N297. The active-site Proton donor is the E160. E375 (nucleophile) is an active-site residue. The D-galactose 6-phosphate site is built by S428, W429, K435, and Y437.

It belongs to the glycosyl hydrolase 1 family.

It carries out the reaction a 6-phospho-beta-D-galactoside + H2O = D-galactose 6-phosphate + an alcohol. It functions in the pathway carbohydrate metabolism; lactose degradation; D-galactose 6-phosphate and beta-D-glucose from lactose 6-phosphate: step 1/1. This Streptococcus pyogenes serotype M18 (strain MGAS8232) protein is 6-phospho-beta-galactosidase.